The primary structure comprises 375 residues: MTSVLIERIEAIIVHDLPTIRPPHKLAMHTMQTQTLVLIRVRCSDGVEGIGEATTIGGLAYGYESPEGIKANIDAHLAPALVGLPADNINAAMLKLDKLAKGNTFAKSGIESALLDAQGKRLGLPVSELLGGRVRDSLEVAWTLASGDTARDIAEAQHMLEIRRHRVFKLKIGANPLAQDLKHVVAIKRELGDSASVRVDVNQYWDESQAIRACQVLGDNGIDLIEQPISRINRSGQVRLNQRSPAPIMADESIESVEDAFSLAADGAASIFALKIAKNGGPRAVLRTAQIAEAAGIALYGGTMLEGSIGTLASAHAFLTLRQLTWGTELFGPLLLTEEIVNEPPQYRDFQLHIPRTPGLGLTLDEQRLARFARR.

The active-site Proton acceptor is lysine 171. Positions 200, 226, and 251 each coordinate Mn(2+). The Proton donor role is filled by glutamate 329.

It belongs to the mandelate racemase/muconate lactonizing enzyme family. In terms of assembly, homooctamer. Mn(2+) is required as a cofactor.

The enzyme catalyses (S)-muconolactone = cis,cis-muconate + H(+). It functions in the pathway aromatic compound metabolism; beta-ketoadipate pathway; 5-oxo-4,5-dihydro-2-furylacetate from catechol: step 2/3. Its function is as follows. Catalyzes a syn cycloisomerization. This is Muconate cycloisomerase 1 (catB) from Pseudomonas putida (Arthrobacter siderocapsulatus).